Consider the following 255-residue polypeptide: 5'-nucleotidase SurE (255 aa).

Asp-8, Asp-9, Ser-39, and Asn-95 together coordinate a divalent metal cation.

This sequence belongs to the SurE nucleotidase family. The cofactor is a divalent metal cation.

Its subcellular location is the cytoplasm. It carries out the reaction a ribonucleoside 5'-phosphate + H2O = a ribonucleoside + phosphate. Its function is as follows. Nucleotidase that shows phosphatase activity on nucleoside 5'-monophosphates. In Rubrivivax gelatinosus (strain NBRC 100245 / IL144), this protein is 5'-nucleotidase SurE.